A 93-amino-acid chain; its full sequence is UPF0473 protein CHY_0543 (93 aa).

Belongs to the UPF0473 family.

The chain is UPF0473 protein CHY_0543 from Carboxydothermus hydrogenoformans (strain ATCC BAA-161 / DSM 6008 / Z-2901).